The sequence spans 339 residues: 1-aminocyclopropane-1-carboxylate deaminase (339 aa).

Lys-52 is modified (N6-(pyridoxal phosphate)lysine). Ser-79 (nucleophile) is an active-site residue.

This sequence belongs to the ACC deaminase/D-cysteine desulfhydrase family. In terms of assembly, homotrimer. Pyridoxal 5'-phosphate serves as cofactor.

The catalysed reaction is 1-aminocyclopropane-1-carboxylate + H2O = 2-oxobutanoate + NH4(+). Its function is as follows. Catalyzes a cyclopropane ring-opening reaction, the irreversible conversion of 1-aminocyclopropane-1-carboxylate (ACC) to ammonia and alpha-ketobutyrate. Allows growth on ACC as a nitrogen source. This is 1-aminocyclopropane-1-carboxylate deaminase from Bradyrhizobium sp. (strain BTAi1 / ATCC BAA-1182).